A 176-amino-acid chain; its full sequence is Probable chemoreceptor glutamine deamidase CheD (176 aa).

It belongs to the CheD family.

The enzyme catalyses L-glutaminyl-[protein] + H2O = L-glutamyl-[protein] + NH4(+). Functionally, probably deamidates glutamine residues to glutamate on methyl-accepting chemotaxis receptors (MCPs), playing an important role in chemotaxis. The protein is Probable chemoreceptor glutamine deamidase CheD of Rhodospirillum rubrum (strain ATCC 11170 / ATH 1.1.1 / DSM 467 / LMG 4362 / NCIMB 8255 / S1).